Consider the following 68-residue polypeptide: Gene 42 protein (68 aa).

The polypeptide is Gene 42 protein (42) (Mycobacterium phage D29 (Mycobacteriophage D29)).